The following is a 451-amino-acid chain: Probable glycine dehydrogenase (decarboxylating) subunit 1 (451 aa).

It belongs to the GcvP family. N-terminal subunit subfamily. The glycine cleavage system is composed of four proteins: P, T, L and H. In this organism, the P 'protein' is a heterodimer of two subunits.

The catalysed reaction is N(6)-[(R)-lipoyl]-L-lysyl-[glycine-cleavage complex H protein] + glycine + H(+) = N(6)-[(R)-S(8)-aminomethyldihydrolipoyl]-L-lysyl-[glycine-cleavage complex H protein] + CO2. The glycine cleavage system catalyzes the degradation of glycine. The P protein binds the alpha-amino group of glycine through its pyridoxal phosphate cofactor; CO(2) is released and the remaining methylamine moiety is then transferred to the lipoamide cofactor of the H protein. This Staphylococcus aureus (strain MSSA476) protein is Probable glycine dehydrogenase (decarboxylating) subunit 1.